The primary structure comprises 269 residues: Cell cycle regulator CcrZ (269 aa).

Residues phenylalanine 39, histidine 76, tryptophan 77, methionine 78, and glycine 80 each contribute to the ATP site. A Brenner's motif [HXDhX3N] motif is present at residues 164–171 (HCDVNHNN). The Proton acceptor role is filled by aspartate 166. The APH motif lies at 180 to 203 (LYLIDWDGAMIADPAMDLGPLLYH).

This sequence belongs to the aminoglycoside phosphotransferase family. Monomer in solution. Interacts with DnaA (via domains I (1-82) and III (111-326)). Interacts with DnaB. Interacts with FtsZ.

Its subcellular location is the cytoplasm. The enzyme catalyses D-ribose + ATP = D-ribose 5-phosphate + ADP + H(+). It carries out the reaction 2-deoxy-D-ribose + ATP = 2-deoxy-D-ribose 5-phosphate + ADP + H(+). Activated by D-ribose and 2-deoxy-D-ribose. Slightly activated by kanamycin and gentamicin. Functionally, plays a role in cell cycle regulation and chromosome integrity. Activates DnaA-dependent chromosomal DNA replication initiation ensuring that the chromosome is replicated at the right time during the cell cycle. May regulate replication initiation through phosphorylation of a possible second messenger or metabolite, and by interacting with replication initiation proteins. Has ATPase activity with D-ribose and 2-deoxy-D-ribose in vitro, but not with choline. Involved in DNA damage response. In Bacillus subtilis (strain 168), this protein is Cell cycle regulator CcrZ.